The chain runs to 316 residues: N-acetyl-gamma-glutamyl-phosphate reductase (316 aa).

Cys136 is an active-site residue.

Belongs to the NAGSA dehydrogenase family. Type 1 subfamily.

It is found in the cytoplasm. It carries out the reaction N-acetyl-L-glutamate 5-semialdehyde + phosphate + NADP(+) = N-acetyl-L-glutamyl 5-phosphate + NADPH + H(+). The protein operates within amino-acid biosynthesis; L-arginine biosynthesis; N(2)-acetyl-L-ornithine from L-glutamate: step 3/4. In terms of biological role, catalyzes the NADPH-dependent reduction of N-acetyl-5-glutamyl phosphate to yield N-acetyl-L-glutamate 5-semialdehyde. The sequence is that of N-acetyl-gamma-glutamyl-phosphate reductase from Xanthomonas euvesicatoria pv. vesicatoria (strain 85-10) (Xanthomonas campestris pv. vesicatoria).